A 348-amino-acid polypeptide reads, in one-letter code: 4-hydroxy-2-oxovalerate aldolase 1 (348 aa).

One can recognise a Pyruvate carboxyltransferase domain in the interval 8–260 (ITVHDMTLRD…QTGVDVWAIQ (253 aa)). Substrate is bound at residue 16–17 (RD). Position 17 (Asp17) interacts with Mn(2+). His20 serves as the catalytic Proton acceptor. The substrate site is built by Ser170 and His199. 2 residues coordinate Mn(2+): His199 and His201. Tyr290 provides a ligand contact to substrate.

It belongs to the 4-hydroxy-2-oxovalerate aldolase family.

The enzyme catalyses (S)-4-hydroxy-2-oxopentanoate = acetaldehyde + pyruvate. This is 4-hydroxy-2-oxovalerate aldolase 1 from Cupriavidus metallidurans (strain ATCC 43123 / DSM 2839 / NBRC 102507 / CH34) (Ralstonia metallidurans).